The following is a 367-amino-acid chain: D-alanine--D-alanine ligase (367 aa).

Positions 150-357 constitute an ATP-grasp domain; the sequence is KKLLTAAGLP…YPTLLATMVE (208 aa). 178-233 serves as a coordination point for ATP; sequence RERLGLPVFVKPSRGGSSIGVSRVTAWDALPAAIELARRHDPKVIVEAAIPGRELE. Mg(2+) is bound by residues D312, E324, and N326.

This sequence belongs to the D-alanine--D-alanine ligase family. Mg(2+) is required as a cofactor. Mn(2+) serves as cofactor.

It localises to the cytoplasm. The catalysed reaction is 2 D-alanine + ATP = D-alanyl-D-alanine + ADP + phosphate + H(+). Its pathway is cell wall biogenesis; peptidoglycan biosynthesis. Its function is as follows. Cell wall formation. The chain is D-alanine--D-alanine ligase from Mycolicibacterium vanbaalenii (strain DSM 7251 / JCM 13017 / BCRC 16820 / KCTC 9966 / NRRL B-24157 / PYR-1) (Mycobacterium vanbaalenii).